A 205-amino-acid chain; its full sequence is Probable calcium-binding protein CML41 (205 aa).

The segment at 26-55 (SFQNRRRSPKSNSSSTLNSPRSNSDDNNNI) is disordered. Residues 35-54 (KSNSSSTLNSPRSNSDDNNN) show a composition bias toward low complexity. EF-hand domains are found at residues 60–95 (ASKE…VGEY), 96–131 (ISHE…RDLY), 137–173 (DGDG…LGES), and 174–205 (RTYG…MMTV). Residues aspartate 73, aspartate 75, aspartate 77, lysine 79, glutamate 84, aspartate 109, aspartate 111, aspartate 113, serine 115, and aspartate 120 each coordinate Ca(2+). Positions 187, 189, 191, and 198 each coordinate Ca(2+).

Functionally, potential calcium sensor. The protein is Probable calcium-binding protein CML41 (CML41) of Arabidopsis thaliana (Mouse-ear cress).